The following is a 684-amino-acid chain: Methionine--tRNA ligase (684 aa).

Residues 14-24 (PYANGAIHLGH) carry the 'HIGH' region motif. Positions 145, 148, 158, and 161 each coordinate Zn(2+). The 'KMSKS' region motif lies at 330–334 (KMSKS). Lys-333 is a binding site for ATP. Residues 582 to 684 (DFAKLDLRVA…CGIRPGMQVK (103 aa)) form the tRNA-binding domain.

This sequence belongs to the class-I aminoacyl-tRNA synthetase family. MetG type 1 subfamily. Homodimer. Zn(2+) serves as cofactor.

The protein localises to the cytoplasm. It catalyses the reaction tRNA(Met) + L-methionine + ATP = L-methionyl-tRNA(Met) + AMP + diphosphate. Is required not only for elongation of protein synthesis but also for the initiation of all mRNA translation through initiator tRNA(fMet) aminoacylation. The polypeptide is Methionine--tRNA ligase (Haemophilus ducreyi (strain 35000HP / ATCC 700724)).